The following is a 568-amino-acid chain: Pentatricopeptide repeat-containing protein At1g73400, mitochondrial (568 aa).

The transit peptide at 1–55 directs the protein to the mitochondrion; that stretch reads MMRRLVSYFVRSRFSLHLSTTPPQRSALFSHILSSHLDSIQINKKISSFSVHRFC. PPR repeat units follow at residues 233–263, 267–301, 302–336, 340–374, 375–409, 410–444, 445–479, and 480–514; these read EINA…MRHR, DANT…GHKP, ENFT…GSAV, TAKT…GCLP, DVST…GYPP, DIVT…RCAP, SVQT…DCVQ, and DVET…GLKL.

It belongs to the PPR family. P subfamily.

It localises to the mitochondrion. This chain is Pentatricopeptide repeat-containing protein At1g73400, mitochondrial, found in Arabidopsis thaliana (Mouse-ear cress).